The sequence spans 429 residues: Enolase (429 aa).

Gln-162 contributes to the (2R)-2-phosphoglycerate binding site. Glu-204 serves as the catalytic Proton donor. Mg(2+) contacts are provided by Asp-241, Glu-286, and Asp-313. (2R)-2-phosphoglycerate contacts are provided by Lys-338, Arg-367, Ser-368, and Lys-389. Catalysis depends on Lys-338, which acts as the Proton acceptor.

This sequence belongs to the enolase family. It depends on Mg(2+) as a cofactor.

The protein localises to the cytoplasm. It localises to the secreted. It is found in the cell surface. The enzyme catalyses (2R)-2-phosphoglycerate = phosphoenolpyruvate + H2O. It participates in carbohydrate degradation; glycolysis; pyruvate from D-glyceraldehyde 3-phosphate: step 4/5. Its function is as follows. Catalyzes the reversible conversion of 2-phosphoglycerate (2-PG) into phosphoenolpyruvate (PEP). It is essential for the degradation of carbohydrates via glycolysis. This is Enolase from Halalkalibacterium halodurans (strain ATCC BAA-125 / DSM 18197 / FERM 7344 / JCM 9153 / C-125) (Bacillus halodurans).